The sequence spans 347 residues: Elongation factor Ts (347 aa).

The segment at 80–83 (TDFV) is involved in Mg(2+) ion dislocation from EF-Tu.

The protein belongs to the EF-Ts family.

It is found in the cytoplasm. Functionally, associates with the EF-Tu.GDP complex and induces the exchange of GDP to GTP. It remains bound to the aminoacyl-tRNA.EF-Tu.GTP complex up to the GTP hydrolysis stage on the ribosome. The protein is Elongation factor Ts of Streptococcus sanguinis (strain SK36).